Consider the following 238-residue polypeptide: 3-dehydroquinate dehydratase (238 aa).

Residues 35–37 (ELR) and Arg-70 contribute to the 3-dehydroquinate site. Residue His-133 is the Proton donor/acceptor of the active site. Catalysis depends on Lys-160, which acts as the Schiff-base intermediate with substrate. The 3-dehydroquinate site is built by Arg-202 and Gln-225.

This sequence belongs to the type-I 3-dehydroquinase family. As to quaternary structure, homodimer.

The enzyme catalyses 3-dehydroquinate = 3-dehydroshikimate + H2O. The protein operates within metabolic intermediate biosynthesis; chorismate biosynthesis; chorismate from D-erythrose 4-phosphate and phosphoenolpyruvate: step 3/7. In terms of biological role, involved in the third step of the chorismate pathway, which leads to the biosynthesis of aromatic amino acids. Catalyzes the cis-dehydration of 3-dehydroquinate (DHQ) and introduces the first double bond of the aromatic ring to yield 3-dehydroshikimate. This Staphylococcus aureus (strain Mu3 / ATCC 700698) protein is 3-dehydroquinate dehydratase.